The chain runs to 289 residues: Probable porphobilinogen deaminase (289 aa).

S-(dipyrrolylmethanemethyl)cysteine is present on Cys-233.

It belongs to the HMBS family. Dipyrromethane is required as a cofactor.

It catalyses the reaction 4 porphobilinogen + H2O = hydroxymethylbilane + 4 NH4(+). Its pathway is porphyrin-containing compound metabolism; protoporphyrin-IX biosynthesis; coproporphyrinogen-III from 5-aminolevulinate: step 2/4. Functionally, tetrapolymerization of the monopyrrole PBG into the hydroxymethylbilane pre-uroporphyrinogen in several discrete steps. This Methanothermobacter thermautotrophicus (strain ATCC 29096 / DSM 1053 / JCM 10044 / NBRC 100330 / Delta H) (Methanobacterium thermoautotrophicum) protein is Probable porphobilinogen deaminase (hemC).